The primary structure comprises 115 residues: Probable K(+)/H(+) antiporter subunit C (115 aa).

A run of 3 helical transmembrane segments spans residues 4-21, 28-47, and 75-97; these read ILSAGIGTLTASGVYLLL, VIIGLSLLSFAVNLFIFGMG, and ALVLTAIVIGFAMTALFLVVLLA.

It belongs to the CPA3 antiporters (TC 2.A.63) subunit C family. As to quaternary structure, may form a hetero-oligomeric complex that consists of six subunits: PhaAB, PhaC, PhaD, PhaE, PhaF and PhaG.

It is found in the cell membrane. Functionally, part of a K(+) efflux system which is required for the adaptation of R.meliloti to alkaline pH as well as for the infection process during symbiotic nodule development. This chain is Probable K(+)/H(+) antiporter subunit C (phaC), found in Rhizobium meliloti (strain 1021) (Ensifer meliloti).